The following is a 435-amino-acid chain: NADH-ubiquinone oxidoreductase chain 4 (435 aa).

13 consecutive transmembrane segments (helical) span residues 27–47 (VLTI…ELNG), 53–73 (FVMG…YLSS), 80–100 (ASFN…FSVS), 102–122 (FFLF…LIVG), 132–152 (AGGY…WGVS), 177–197 (LWWL…FHLW), 206–226 (PVAG…YGLL), 239–259 (VFFV…GLAC), 267–285 (CLVA…LGVL), 295–317 (AIII…NAIY), 324–344 (LLVM…MCFL), 372–394 (SXAF…LYLY), and 414–434 (LCDV…FMFM).

This sequence belongs to the complex I subunit 4 family.

The protein resides in the mitochondrion membrane. It carries out the reaction a ubiquinone + NADH + 5 H(+)(in) = a ubiquinol + NAD(+) + 4 H(+)(out). Its function is as follows. Core subunit of the mitochondrial membrane respiratory chain NADH dehydrogenase (Complex I) that is believed to belong to the minimal assembly required for catalysis. Complex I functions in the transfer of electrons from NADH to the respiratory chain. The immediate electron acceptor for the enzyme is believed to be ubiquinone. The protein is NADH-ubiquinone oxidoreductase chain 4 (ND4) of Mytilus edulis (Blue mussel).